Here is a 429-residue protein sequence, read N- to C-terminus: MADTTIEAITAREVLDSRGNPTIEVDVYLESGDMGRAIVPSGASTGAFEALELRDGDKSRYGGKGVLKAVENVNTTIAEALEGEDAADQMRIDRMLIDLDGAENKGRLGANAILGVSLACAKAAAAAHGLPLYRYLGGIHAHVLPVPMMNILNGGKHAQNSTDFQEFMIMPVGAPSFREALRWGSEIYQSLKKVIHDRGGSTNVGDEGGFAPSLPTNEAALQIIVEAVERAGYQLGDQVMLAMDPACTELYKDGKYHLEREGRSLTSAEMVEYWADIAARYPLISLEDGLAEEDWEGWKLLRARLGDRIQLVGDDFLVTNVKRLARAISEQAANSILIKLNQIGTLTETLDAITMANRAGWTAVVSHRSGESEDVTIADLVVATNAGQIKTGAPARTDRVAKYNQLLRIEEELDSAAHYAGMGAFRVAR.

A (2R)-2-phosphoglycerate-binding site is contributed by glutamine 165. The Proton donor role is filled by glutamate 207. Positions 244, 287, and 314 each coordinate Mg(2+). Residues lysine 339, arginine 368, serine 369, and lysine 390 each coordinate (2R)-2-phosphoglycerate. Residue lysine 339 is the Proton acceptor of the active site.

The protein belongs to the enolase family. It depends on Mg(2+) as a cofactor.

The protein resides in the cytoplasm. It localises to the secreted. It is found in the cell surface. It catalyses the reaction (2R)-2-phosphoglycerate = phosphoenolpyruvate + H2O. It participates in carbohydrate degradation; glycolysis; pyruvate from D-glyceraldehyde 3-phosphate: step 4/5. Its function is as follows. Catalyzes the reversible conversion of 2-phosphoglycerate (2-PG) into phosphoenolpyruvate (PEP). It is essential for the degradation of carbohydrates via glycolysis. The sequence is that of Enolase from Roseiflexus castenholzii (strain DSM 13941 / HLO8).